The chain runs to 207 residues: Large ribosomal subunit protein bL25 (207 aa).

Belongs to the bacterial ribosomal protein bL25 family. CTC subfamily. Part of the 50S ribosomal subunit; part of the 5S rRNA/L5/L18/L25 subcomplex. Contacts the 5S rRNA. Binds to the 5S rRNA independently of L5 and L18.

This is one of the proteins that binds to the 5S RNA in the ribosome where it forms part of the central protuberance. In Brucella abortus (strain S19), this protein is Large ribosomal subunit protein bL25.